Here is a 216-residue protein sequence, read N- to C-terminus: uncharacterized protein (216 aa).

A Cupin type-2 domain is found at 125-176; it reads YPKSTNFDSHYHDCDEYWVIIEGAGTVVVGSRSFEVEVGDCVAIGMGHHHDL.

This is an uncharacterized protein from Sinorhizobium fredii (strain NBRC 101917 / NGR234).